A 154-amino-acid chain; its full sequence is 17 kDa surface antigen (154 aa).

The signal sequence occupies residues 1-19 (MKLLSKIMIIALAASMLQA). Residue Cys20 is the site of N-palmitoyl cysteine attachment. Residue Cys20 is the site of S-diacylglycerol cysteine attachment.

Belongs to the rickettsiale 17 kDa surface antigen family.

The protein localises to the cell outer membrane. The protein is 17 kDa surface antigen (omp) of Rickettsia montanensis.